We begin with the raw amino-acid sequence, 217 residues long: GrpE protein homolog 1, mitochondrial (217 aa).

The N-terminal 27 residues, 1–27, are a transit peptide targeting the mitochondrion; the sequence is MAARCVRLARGSLPAFALSLRSSPRLL. K94 carries the post-translational modification N6-acetyllysine; alternate. The residue at position 94 (K94) is an N6-succinyllysine; alternate. At K100 the chain carries N6-acetyllysine. At K120 the chain carries N6-succinyllysine. K215 carries the post-translational modification N6-acetyllysine; alternate. K215 is subject to N6-succinyllysine; alternate.

This sequence belongs to the GrpE family. In terms of assembly, probable component of the PAM complex at least composed of a mitochondrial HSP70 protein, GRPEL1 or GRPEL2, TIMM44, TIMM16/PAM16 and TIMM14/DNAJC19. Binds to HSP70, HSC70 and HSJ1B.

The protein localises to the mitochondrion matrix. In terms of biological role, essential component of the PAM complex, a complex required for the translocation of transit peptide-containing proteins from the inner membrane into the mitochondrial matrix in an ATP-dependent manner. Seems to control the nucleotide-dependent binding of mitochondrial HSP70 to substrate proteins. The polypeptide is GrpE protein homolog 1, mitochondrial (GRPEL1) (Bos taurus (Bovine)).